The sequence spans 287 residues: Homoserine kinase (287 aa).

78–88 provides a ligand contact to ATP; it reads PLAHGLGSSSS.

This sequence belongs to the GHMP kinase family. Homoserine kinase subfamily.

The protein localises to the cytoplasm. The catalysed reaction is L-homoserine + ATP = O-phospho-L-homoserine + ADP + H(+). Its pathway is amino-acid biosynthesis; L-threonine biosynthesis; L-threonine from L-aspartate: step 4/5. Functionally, catalyzes the ATP-dependent phosphorylation of L-homoserine to L-homoserine phosphate. The sequence is that of Homoserine kinase from Lactobacillus acidophilus (strain ATCC 700396 / NCK56 / N2 / NCFM).